The sequence spans 160 residues: uncharacterized protein (160 aa).

The signal sequence occupies residues 1 to 29 (MTGKTHIMGGIASCTAAAYYYGFDPVLMA). The next 2 membrane-spanning stretches (helical) occupy residues 67 to 87 (TFTHSLLFMLIMFFITSTYIP) and 137 to 157 (QLVLAGLTLASCYYFYMLFHG).

This sequence to E.coli YdjM.

The protein localises to the cell membrane. This is an uncharacterized protein from Bacillus subtilis (strain 168).